Reading from the N-terminus, the 252-residue chain is Triosephosphate isomerase (252 aa).

10 to 12 (NWK) contacts substrate. His-96 functions as the Electrophile in the catalytic mechanism. The Proton acceptor role is filled by Glu-168. Residues Gly-174, Ser-214, and 235 to 236 (GG) contribute to the substrate site.

The protein belongs to the triosephosphate isomerase family. Homodimer.

The protein localises to the cytoplasm. The enzyme catalyses D-glyceraldehyde 3-phosphate = dihydroxyacetone phosphate. It functions in the pathway carbohydrate biosynthesis; gluconeogenesis. It participates in carbohydrate degradation; glycolysis; D-glyceraldehyde 3-phosphate from glycerone phosphate: step 1/1. In terms of biological role, involved in the gluconeogenesis. Catalyzes stereospecifically the conversion of dihydroxyacetone phosphate (DHAP) to D-glyceraldehyde-3-phosphate (G3P). This is Triosephosphate isomerase from Streptococcus agalactiae serotype Ia (strain ATCC 27591 / A909 / CDC SS700).